We begin with the raw amino-acid sequence, 298 residues long: Ribose-phosphate pyrophosphokinase (298 aa).

Residues 33-35 and 91-92 contribute to the ATP site; these read DGE and RQ. Residues His-125 and Asp-164 each contribute to the Mg(2+) site. Lys-187 is a catalytic residue. Arg-189 and Asp-224 together coordinate D-ribose 5-phosphate.

It belongs to the ribose-phosphate pyrophosphokinase family. Class III (archaeal) subfamily. The cofactor is Mg(2+).

The protein localises to the cytoplasm. It catalyses the reaction D-ribose 5-phosphate + ATP = 5-phospho-alpha-D-ribose 1-diphosphate + AMP + H(+). Its pathway is metabolic intermediate biosynthesis; 5-phospho-alpha-D-ribose 1-diphosphate biosynthesis; 5-phospho-alpha-D-ribose 1-diphosphate from D-ribose 5-phosphate (route I): step 1/1. Its function is as follows. Involved in the biosynthesis of the central metabolite phospho-alpha-D-ribosyl-1-pyrophosphate (PRPP) via the transfer of pyrophosphoryl group from ATP to 1-hydroxyl of ribose-5-phosphate (Rib-5-P). This is Ribose-phosphate pyrophosphokinase from Methanobrevibacter smithii (strain ATCC 35061 / DSM 861 / OCM 144 / PS).